We begin with the raw amino-acid sequence, 201 residues long: Translation initiation factor IF-3 (201 aa).

It belongs to the IF-3 family. In terms of assembly, monomer.

The protein localises to the cytoplasm. Its function is as follows. IF-3 binds to the 30S ribosomal subunit and shifts the equilibrium between 70S ribosomes and their 50S and 30S subunits in favor of the free subunits, thus enhancing the availability of 30S subunits on which protein synthesis initiation begins. This chain is Translation initiation factor IF-3, found in Prochlorococcus marinus (strain SARG / CCMP1375 / SS120).